Consider the following 127-residue polypeptide: Large ribosomal subunit protein uL22c (127 aa).

Belongs to the universal ribosomal protein uL22 family. In terms of assembly, part of the 50S ribosomal subunit.

The protein localises to the plastid. Its subcellular location is the chloroplast. Functionally, this protein binds specifically to 23S rRNA. In terms of biological role, the globular domain of the protein is located near the polypeptide exit tunnel on the outside of the subunit, while an extended beta-hairpin is found that lines the wall of the exit tunnel in the center of the 70S ribosome. The sequence is that of Large ribosomal subunit protein uL22c (rpl22) from Acorus calamus var. americanus (American sweet flag).